The chain runs to 366 residues: Transmembrane protein 26 (366 aa).

A run of 3 helical transmembrane segments spans residues 4–24, 36–56, and 64–84; these read LVLLKALVTRLLFLLHSLVAV, YWLLALLNLLLVLETVLTLKF, and WLSPAIFVYLVNIMPSLWLLE. A glycan (N-linked (GlcNAc...) asparagine) is linked at asparagine 110. Transmembrane regions (helical) follow at residues 138-158, 176-196, 208-228, 258-278, and 282-302; these read MVCEPVWTLGLHQTLLLILII, ELLLMFVGTAADILEFTTETL, VSGILVVWTWSMLQFPLDLAV, IGLSFFIQDGPFLVVRLVLMI, and VINHMLVFFAVKNSLVMALHF. The segment covering 319–329 has biased composition (basic and acidic residues); that stretch reads HPESPKPEHSG. The disordered stretch occupies residues 319 to 366; the sequence is HPESPKPEHSGPDQPSESGPSEWEDASPEALPLRTSPVTSEESYPTTP. The segment covering 354 to 366 has biased composition (polar residues); it reads SPVTSEESYPTTP.

It localises to the membrane. This is Transmembrane protein 26 (Tmem26) from Mus musculus (Mouse).